A 205-amino-acid polypeptide reads, in one-letter code: ITG-like peptide (205 aa).

Residues 1–15 (MRVYAAITLVLVANT) form the signal peptide. 2 propeptides span residues 16–188 (AYIG…TSGE) and 202–205 (MPFA).

Expressed throughout the nervous system (at protein level).

The protein localises to the secreted. The sequence is that of ITG-like peptide from Camponotus floridanus (Florida carpenter ant).